Reading from the N-terminus, the 452-residue chain is MAVQALPEINKLSVSEEGAANAAAKGQAAQGTAGNDDAENDESDEDKEDEQEVADGAAAAGGKKKKKKTKKKKKKGTAKVQSDPPRVPLSTLFPNNNYPEGEIVEYKDDNAYRTTNEEKRYLDRMNNDFLTDYRKSAEIHRQVRQYAQKELLKPGRSLTEIAEGIEDSVRALTGHMGLEEGDSLVAGMGFPTGLNINHCAAHYSPNAGNKMVLQYGDVMKVDFGVHVNGRIVDSAFTVAFDPVYDNLLNAVKDATNTGIREAGIDVRMSDIGAAIQETMESYEVEINGTIYPVKAIRNLNGHTIGHYLIHGGSTGKSVPIVKGGDQTKMEEGETYAIETFGSTGKGFVRDDMEVSHYAKVPDAPNVPLRLSSAKNLLNVITKNFGTLPFCRRYLDRLGQEKYLLGLNNLVSSGLVDAYPPLVDVKGSYTAQFEHTILLRPNVKEVITRGDDY.

A disordered region spans residues 1–96 (MAVQALPEIN…VPLSTLFPNN (96 aa)). Residues 18 to 35 (GAANAAAKGQAAQGTAGN) show a composition bias toward low complexity. The segment covering 36–53 (DDAENDESDEDKEDEQEV) has biased composition (acidic residues). A compositionally biased stretch (basic residues) spans 62–77 (GKKKKKKTKKKKKKGT). His202 serves as a coordination point for substrate. A divalent metal cation is bound by residues Asp222, Asp233, and His302. His310 serves as a coordination point for substrate. A divalent metal cation-binding residues include Glu338 and Glu433.

This sequence belongs to the peptidase M24A family. Methionine aminopeptidase eukaryotic type 2 subfamily. The cofactor is Co(2+). Zn(2+) serves as cofactor. Mn(2+) is required as a cofactor. It depends on Fe(2+) as a cofactor.

It is found in the cytoplasm. The enzyme catalyses Release of N-terminal amino acids, preferentially methionine, from peptides and arylamides.. Its function is as follows. Cotranslationally removes the N-terminal methionine from nascent proteins. The N-terminal methionine is often cleaved when the second residue in the primary sequence is small and uncharged (Met-Ala-, Cys, Gly, Pro, Ser, Thr, or Val). The sequence is that of Methionine aminopeptidase 2 from Coccidioides posadasii (strain C735) (Valley fever fungus).